A 245-amino-acid chain; its full sequence is Carboxy-S-adenosyl-L-methionine synthase (245 aa).

Residues Y42, 67 to 69 (GCS), 92 to 93 (DN), 120 to 121 (DI), N135, and R202 each bind S-adenosyl-L-methionine.

Belongs to the class I-like SAM-binding methyltransferase superfamily. Cx-SAM synthase family. Homodimer.

The catalysed reaction is prephenate + S-adenosyl-L-methionine = carboxy-S-adenosyl-L-methionine + 3-phenylpyruvate + H2O. Catalyzes the conversion of S-adenosyl-L-methionine (SAM) to carboxy-S-adenosyl-L-methionine (Cx-SAM). This is Carboxy-S-adenosyl-L-methionine synthase from Vibrio vulnificus (strain YJ016).